Consider the following 145-residue polypeptide: Functional amyloid chaperone FapA (145 aa).

The N-terminal stretch at 1 to 27 (MRKRDKRLYHLLLVGCVLGSLSLTAQA) is a signal peptide.

The protein belongs to the FapA family. In terms of assembly, monomer in solution. Interacts with FapC but not FapB in vitro.

It localises to the periplasm. Its function is as follows. An intrinsically disordered chaperone for fibril amyloid FapC that guards against fibrillation, pro within the periplasm. Upon overexpression of the endogenous six-gene locus (fapA-fapF), cells form large clumps during liquid growth, make large amounts of biofilm and produce relatively unstable amyloid fibrils. This chain is Functional amyloid chaperone FapA, found in Pseudomonas putida (strain ATCC 700007 / DSM 6899 / JCM 31910 / BCRC 17059 / LMG 24140 / F1).